The chain runs to 135 residues: CDGSH iron-sulfur domain-containing protein 2 (135 aa).

The Lumenal portion of the chain corresponds to 1–37; that stretch reads MVLESVARIVKVQLPAYLKRLPVPESITGFARLTVSE. Residues 38–60 traverse the membrane as a helical segment; sequence WLRLLPFLGVLALLGYLAVRPFL. Residues 61–135 are Cytoplasmic-facing; that stretch reads PKKKQQKDSL…GPLILKKKEV (75 aa). [2Fe-2S] cluster contacts are provided by Cys99, Cys101, Cys110, and His114.

Belongs to the CISD protein family. CISD2 subfamily. In terms of assembly, homodimer. Interacts with BCL2; the interaction is direct and disrupted by BIK interaction with BCL2. Interacts with BCL2L1. Interacts with ITPR1. [2Fe-2S] cluster is required as a cofactor.

Its subcellular location is the endoplasmic reticulum membrane. It localises to the mitochondrion outer membrane. In terms of biological role, regulator of autophagy that contributes to antagonize BECN1-mediated cellular autophagy at the endoplasmic reticulum. Participates in the interaction of BCL2 with BECN1 and is required for BCL2-mediated depression of endoplasmic reticulum Ca(2+) stores during autophagy. Contributes to BIK-initiated autophagy, while it is not involved in BIK-dependent activation of caspases. Involved in life span control, probably via its function as regulator of autophagy. The protein is CDGSH iron-sulfur domain-containing protein 2 (CISD2) of Bos taurus (Bovine).